A 473-amino-acid polypeptide reads, in one-letter code: Bifunctional NAD(P)H-hydrate repair enzyme Nnr (473 aa).

The NAD(P)H-hydrate epimerase stretch occupies residues 1 to 211 (MRHYYSVDTI…AHTDVLGFEA (211 aa)). Residues 10-205 (IRAAEAPLLA…DIGLDLAHTD (196 aa)) form the YjeF N-terminal domain. The NADPHX 1; for epimerase activity stretch occupies residues 62–66 (DNGGD). 2 residues coordinate K(+): asparagine 63 and aspartate 119. The tract at residues 123–129 (GISGSGP) is NADPHX 1; for epimerase activity. Aspartate 152 serves as a coordination point for (6S)-NADPHX. A K(+)-binding site is contributed by serine 155. A YjeF C-terminal domain is found at 210–473 (EATDVAARWP…GHIRAALAAL (264 aa)). An ADP-dependent (S)-NAD(P)H-hydrate dehydratase region spans residues 211–473 (ATDVAARWPV…GHIRAALAAL (263 aa)). Glycine 298 is a (6S)-NADPHX binding site. The segment at 348 to 354 (HAGEFAR) is NADPHX 2; for dehydratase activity. ADP is bound by residues 382-386 (KGNVT) and 402-411 (QSWAATAGSG). Aspartate 412 contacts (6S)-NADPHX.

This sequence in the N-terminal section; belongs to the NnrE/AIBP family. In the C-terminal section; belongs to the NnrD/CARKD family. Requires K(+) as cofactor.

It catalyses the reaction (6S)-NADHX + ADP = AMP + phosphate + NADH + H(+). The catalysed reaction is (6S)-NADPHX + ADP = AMP + phosphate + NADPH + H(+). The enzyme catalyses (6R)-NADHX = (6S)-NADHX. It carries out the reaction (6R)-NADPHX = (6S)-NADPHX. Its function is as follows. Bifunctional enzyme that catalyzes the epimerization of the S- and R-forms of NAD(P)HX and the dehydration of the S-form of NAD(P)HX at the expense of ADP, which is converted to AMP. This allows the repair of both epimers of NAD(P)HX, a damaged form of NAD(P)H that is a result of enzymatic or heat-dependent hydration. The protein is Bifunctional NAD(P)H-hydrate repair enzyme Nnr (nnr) of Mycobacterium tuberculosis (strain CDC 1551 / Oshkosh).